We begin with the raw amino-acid sequence, 898 residues long: Vacuolar membrane protease (898 aa).

The Cytoplasmic portion of the chain corresponds to 1 to 14 (MGIVDYLVAAVSFR). The chain crosses the membrane as a helical span at residues 15–35 (TLPTTFVAVLVYLAIFISVLI). Residues 36–342 (TDELPATPKD…LFGQALIVFP (307 aa)) lie on the Vacuolar side of the membrane. Residues asparagine 50, asparagine 103, and asparagine 110 are each glycosylated (N-linked (GlcNAc...) asparagine). Residues histidine 139 and aspartate 151 each coordinate Zn(2+). The active-site Proton acceptor is glutamate 183. Glutamate 184 contacts Zn(2+). Asparagine 200 is a glycosylation site (N-linked (GlcNAc...) asparagine). Zn(2+) contacts are provided by glutamate 209 and histidine 284. Residues 343–365 (LSAMITFNIVFLVVGPIMLALLV) form a helical membrane-spanning segment. Topologically, residues 366 to 411 (TFDIVARHRRQEMIGGGYEEQGFFARAWTSFKSFRWVGGFWKHAKF) are cytoplasmic. The helical transmembrane segment at 412-432 (WVALAVTVGLQVLLCVGYLYI) threads the bilayer. Asparagine 433 is a topological domain (vacuolar). A helical membrane pass occupies residues 434 to 454 (PLIAYSSSHIVLLSFLSLAYL). The Cytoplasmic segment spans residues 455–479 (STYLVHNIPSPTDTYGSHLPEQQKQ). A helical transmembrane segment spans residues 480 to 500 (AALFQLYFFTWILLLAATVVG). Residues 501 to 509 (AKLSVGSFY) are Vacuolar-facing. Residues 510–530 (ILSLWNAVLFAACAIGSIAGL) traverse the membrane as a helical segment. Topologically, residues 531–593 (LSSHTVEGDA…PGGKEGEEVS (63 aa)) are cytoplasmic. A helical membrane pass occupies residues 594–614 (GAIGWWFVQFVLSVPAVVILV). Residues 615–635 (SQLALLMLAATEQTLADGSPA) are Vacuolar-facing. The helical transmembrane segment at 636-656 (VTVYGGASLMSVLAILPLAPF) threads the bilayer. Over 657 to 664 (ACKLHRRV) the chain is Cytoplasmic. The chain crosses the membrane as a helical span at residues 665 to 685 (AYVALVVLIASTAYAWLVFPF). Residues 686–898 (SERAPLKVFF…LVEGYKAFAV (213 aa)) lie on the Vacuolar side of the membrane. N-linked (GlcNAc...) asparagine glycans are attached at residues asparagine 704, asparagine 733, and asparagine 764.

The protein belongs to the peptidase M28 family. Zn(2+) serves as cofactor.

It is found in the vacuole membrane. In terms of biological role, may be involved in vacuolar sorting and osmoregulation. The sequence is that of Vacuolar membrane protease from Schizophyllum commune (strain H4-8 / FGSC 9210) (Split gill fungus).